Reading from the N-terminus, the 82-residue chain is Small ribosomal subunit protein bS18 (82 aa).

Positions 1–20 are disordered; it reads MVDINQIPTRRPFHRRRKTC.

It belongs to the bacterial ribosomal protein bS18 family. Part of the 30S ribosomal subunit. Forms a tight heterodimer with protein bS6.

Binds as a heterodimer with protein bS6 to the central domain of the 16S rRNA, where it helps stabilize the platform of the 30S subunit. The sequence is that of Small ribosomal subunit protein bS18 from Mesorhizobium japonicum (strain LMG 29417 / CECT 9101 / MAFF 303099) (Mesorhizobium loti (strain MAFF 303099)).